Here is a 479-residue protein sequence, read N- to C-terminus: GTPase Der (479 aa).

EngA-type G domains lie at 3-166 (PVVA…AEEY) and 192-365 (LKLA…ASAT). Residues 9 to 16 (GRPNVGKS), 56 to 60 (DTGGI), 118 to 121 (NKID), 198 to 205 (GRPNVGKS), 245 to 249 (DTAGV), and 310 to 313 (NKWD) contribute to the GTP site. Positions 366-450 (QRISTSKLTK…PIKVEFREPV (85 aa)) constitute a KH-like domain.

It belongs to the TRAFAC class TrmE-Era-EngA-EngB-Septin-like GTPase superfamily. EngA (Der) GTPase family. Associates with the 50S ribosomal subunit.

GTPase that plays an essential role in the late steps of ribosome biogenesis. The chain is GTPase Der from Idiomarina loihiensis (strain ATCC BAA-735 / DSM 15497 / L2-TR).